The primary structure comprises 245 residues: Adenosylcobinamide-GDP ribazoletransferase (245 aa).

6 consecutive transmembrane segments (helical) span residues 35–55, 108–128, 137–157, 176–196, 197–217, and 222–242; these read WFPL…ALGL, IGAF…IGAH, GVLI…AALV, IAIG…TPVM, TTVT…HLAR, and INGD…LLAA.

It belongs to the CobS family. The cofactor is Mg(2+).

It localises to the cell inner membrane. The catalysed reaction is alpha-ribazole + adenosylcob(III)inamide-GDP = adenosylcob(III)alamin + GMP + H(+). The enzyme catalyses alpha-ribazole 5'-phosphate + adenosylcob(III)inamide-GDP = adenosylcob(III)alamin 5'-phosphate + GMP + H(+). The protein operates within cofactor biosynthesis; adenosylcobalamin biosynthesis; adenosylcobalamin from cob(II)yrinate a,c-diamide: step 7/7. In terms of biological role, joins adenosylcobinamide-GDP and alpha-ribazole to generate adenosylcobalamin (Ado-cobalamin). Also synthesizes adenosylcobalamin 5'-phosphate from adenosylcobinamide-GDP and alpha-ribazole 5'-phosphate. In Nitratidesulfovibrio vulgaris (strain DP4) (Desulfovibrio vulgaris), this protein is Adenosylcobinamide-GDP ribazoletransferase.